The primary structure comprises 463 residues: ATP-dependent protease ATPase subunit HslU (463 aa).

Residues Ile-19, 61 to 66 (GVGKTE), Asp-277, Glu-341, and Arg-413 contribute to the ATP site.

Belongs to the ClpX chaperone family. HslU subfamily. As to quaternary structure, a double ring-shaped homohexamer of HslV is capped on each side by a ring-shaped HslU homohexamer. The assembly of the HslU/HslV complex is dependent on binding of ATP.

The protein resides in the cytoplasm. Its function is as follows. ATPase subunit of a proteasome-like degradation complex; this subunit has chaperone activity. The binding of ATP and its subsequent hydrolysis by HslU are essential for unfolding of protein substrates subsequently hydrolyzed by HslV. HslU recognizes the N-terminal part of its protein substrates and unfolds these before they are guided to HslV for hydrolysis. The polypeptide is ATP-dependent protease ATPase subunit HslU (Bacillus cytotoxicus (strain DSM 22905 / CIP 110041 / 391-98 / NVH 391-98)).